The primary structure comprises 172 residues: Peptide methionine sulfoxide reductase MsrA (172 aa).

Residue cysteine 12 is part of the active site.

Belongs to the MsrA Met sulfoxide reductase family.

It carries out the reaction L-methionyl-[protein] + [thioredoxin]-disulfide + H2O = L-methionyl-(S)-S-oxide-[protein] + [thioredoxin]-dithiol. The catalysed reaction is [thioredoxin]-disulfide + L-methionine + H2O = L-methionine (S)-S-oxide + [thioredoxin]-dithiol. Has an important function as a repair enzyme for proteins that have been inactivated by oxidation. Catalyzes the reversible oxidation-reduction of methionine sulfoxide in proteins to methionine. The polypeptide is Peptide methionine sulfoxide reductase MsrA (Ligilactobacillus salivarius (strain UCC118) (Lactobacillus salivarius)).